The chain runs to 92 residues: Large ribosomal subunit protein bL28 (92 aa).

Belongs to the bacterial ribosomal protein bL28 family.

The polypeptide is Large ribosomal subunit protein bL28 (Borreliella afzelii (strain PKo) (Borrelia afzelii)).